The chain runs to 446 residues: GTPase Der (446 aa).

EngA-type G domains are found at residues 3–168 (PVIA…YAGQ) and 181–354 (IKIA…KAAM). GTP contacts are provided by residues 9-16 (GRPNVGKS), 57-61 (DTGGF), 120-123 (NKAE), 187-194 (GRPNVGKS), 234-238 (DTAGL), and 299-302 (NKWD). One can recognise a KH-like domain in the interval 355–439 (SKLPTPKLTR…PLRIEFRSST (85 aa)).

It belongs to the TRAFAC class TrmE-Era-EngA-EngB-Septin-like GTPase superfamily. EngA (Der) GTPase family. As to quaternary structure, associates with the 50S ribosomal subunit.

GTPase that plays an essential role in the late steps of ribosome biogenesis. This is GTPase Der from Paraburkholderia phymatum (strain DSM 17167 / CIP 108236 / LMG 21445 / STM815) (Burkholderia phymatum).